The primary structure comprises 426 residues: Serine--tRNA ligase (426 aa).

233-235 (TAE) contributes to the L-serine binding site. 264-266 (RSE) lines the ATP pocket. Glutamate 287 contributes to the L-serine binding site. 351–354 (EISS) is a binding site for ATP. Serine 387 is a binding site for L-serine.

This sequence belongs to the class-II aminoacyl-tRNA synthetase family. Type-1 seryl-tRNA synthetase subfamily. Homodimer. The tRNA molecule binds across the dimer.

The protein resides in the cytoplasm. It catalyses the reaction tRNA(Ser) + L-serine + ATP = L-seryl-tRNA(Ser) + AMP + diphosphate + H(+). It carries out the reaction tRNA(Sec) + L-serine + ATP = L-seryl-tRNA(Sec) + AMP + diphosphate + H(+). It participates in aminoacyl-tRNA biosynthesis; selenocysteinyl-tRNA(Sec) biosynthesis; L-seryl-tRNA(Sec) from L-serine and tRNA(Sec): step 1/1. In terms of biological role, catalyzes the attachment of serine to tRNA(Ser). Is also able to aminoacylate tRNA(Sec) with serine, to form the misacylated tRNA L-seryl-tRNA(Sec), which will be further converted into selenocysteinyl-tRNA(Sec). This Pseudomonas aeruginosa (strain LESB58) protein is Serine--tRNA ligase.